A 561-amino-acid polypeptide reads, in one-letter code: Dihydroxy-acid dehydratase (561 aa).

Residue D80 coordinates Mg(2+). Position 121 (C121) interacts with [2Fe-2S] cluster. 2 residues coordinate Mg(2+): D122 and K123. Residue K123 is modified to N6-carboxylysine. C194 is a binding site for [2Fe-2S] cluster. E448 lines the Mg(2+) pocket. S474 serves as the catalytic Proton acceptor.

It belongs to the IlvD/Edd family. Homodimer. It depends on [2Fe-2S] cluster as a cofactor. The cofactor is Mg(2+).

It carries out the reaction (2R)-2,3-dihydroxy-3-methylbutanoate = 3-methyl-2-oxobutanoate + H2O. It catalyses the reaction (2R,3R)-2,3-dihydroxy-3-methylpentanoate = (S)-3-methyl-2-oxopentanoate + H2O. It functions in the pathway amino-acid biosynthesis; L-isoleucine biosynthesis; L-isoleucine from 2-oxobutanoate: step 3/4. The protein operates within amino-acid biosynthesis; L-valine biosynthesis; L-valine from pyruvate: step 3/4. Functions in the biosynthesis of branched-chain amino acids. Catalyzes the dehydration of (2R,3R)-2,3-dihydroxy-3-methylpentanoate (2,3-dihydroxy-3-methylvalerate) into 2-oxo-3-methylpentanoate (2-oxo-3-methylvalerate) and of (2R)-2,3-dihydroxy-3-methylbutanoate (2,3-dihydroxyisovalerate) into 2-oxo-3-methylbutanoate (2-oxoisovalerate), the penultimate precursor to L-isoleucine and L-valine, respectively. The chain is Dihydroxy-acid dehydratase from Anaeromyxobacter sp. (strain Fw109-5).